The primary structure comprises 290 residues: Programmed cell death 1 ligand 1 (290 aa).

A signal peptide spans 1 to 18; sequence MRIFAGIIFTACCHLLRA. Positions 19–127 constitute an Ig-like V-type domain; sequence FTITAPKDLY…YGGADYKRIT (109 aa). The Extracellular segment spans residues 19-239; that stretch reads FTITAPKDLY…ATHPPQNRTH (221 aa). N-linked (GlcNAc...) asparagine glycosylation occurs at Asn-35. 2 cysteine pairs are disulfide-bonded: Cys-40-Cys-114 and Cys-154-Cys-208. The 92-residue stretch at 133 to 224 folds into the Ig-like C2-type domain; that stretch reads PYRKINQRIS…PGQNHTAELI (92 aa). 4 N-linked (GlcNAc...) asparagine glycosylation sites follow: Asn-191, Asn-199, Asn-218, and Asn-236. Residues 240-260 form a helical membrane-spanning segment; the sequence is WVLLGSILLFLIVVSTVLLFL. Over 261 to 290 the chain is Cytoplasmic; that stretch reads RKQVRMLDVEKCGVEDTSSKNRNDTQFEET.

This sequence belongs to the immunoglobulin superfamily. BTN/MOG family. As to quaternary structure, interacts with PDCD1. Interacts with CMTM4 and CMTM6. Interacts with CD80. Post-translationally, ubiquitinated; STUB1 likely mediates polyubiquitination of PD-L1/CD274 triggering its degradation. Ubiquitinated by MARCHF8; leading to degradation. Deubiquitinated by USP22; leading to stabilization. In terms of tissue distribution, highly expressed in the heart, thymus, skeletal muscle, and lung. Weakly expressed in the kidney, spleen, thyroid, and liver. Expressed on activated dendritic cells, B-cells and macrophages. Expressed in numerous tumor cells lines of lymphoid origin.

It is found in the cell membrane. The protein localises to the early endosome membrane. Its subcellular location is the recycling endosome membrane. In terms of biological role, plays a critical role in induction and maintenance of immune tolerance to self. As a ligand for the inhibitory receptor PDCD1/PD-1, modulates the activation threshold of T-cells and limits T-cell effector response. Through a yet unknown activating receptor, may costimulate T-cell subsets that predominantly produce interleukin-10 (IL10). Functionally, the PDCD1-mediated inhibitory pathway is exploited by tumors to attenuate anti-tumor immunity and escape destruction by the immune system, thereby facilitating tumor survival. The interaction with PDCD1/PD-1 inhibits cytotoxic T lymphocytes (CTLs) effector function. The blockage of the PDCD1-mediated pathway results in the reversal of the exhausted T-cell phenotype and the normalization of the anti-tumor response, providing a rationale for cancer immunotherapy. The polypeptide is Programmed cell death 1 ligand 1 (Cd274) (Mus musculus (Mouse)).